The primary structure comprises 226 residues: NADH-ubiquinone oxidoreductase chain 6 (226 aa).

Helical transmembrane passes span 2–22 (STLG…LVIL), 28–48 (IYSI…LLTV), 56–76 (IYIL…VMMI), 90–110 (YNIY…ILIT), and 169–189 (IWFI…IYIT).

The protein belongs to the complex I subunit 6 family.

It is found in the mitochondrion membrane. The catalysed reaction is a ubiquinone + NADH + 5 H(+)(in) = a ubiquinol + NAD(+) + 4 H(+)(out). Core subunit of the mitochondrial membrane respiratory chain NADH dehydrogenase (Complex I) that is believed to belong to the minimal assembly required for catalysis. Complex I functions in the transfer of electrons from NADH to the respiratory chain. The immediate electron acceptor for the enzyme is believed to be ubiquinone. The protein is NADH-ubiquinone oxidoreductase chain 6 (nad6) of Dictyostelium discoideum (Social amoeba).